The chain runs to 510 residues: Putative cytochrome P450 cyp-13B1 (510 aa).

A heme-binding site is contributed by C456.

Belongs to the cytochrome P450 family. It depends on heme as a cofactor.

In terms of biological role, cytochromes P450 are a group of heme-thiolate monooxygenases. They oxidize a variety of structurally unrelated compounds, including steroids, fatty acids, and xenobiotics. May play a role in the regulation of lifespan. The protein is Putative cytochrome P450 cyp-13B1 of Caenorhabditis elegans.